Reading from the N-terminus, the 105-residue chain is Small ribosomal subunit protein uS10 (105 aa).

It belongs to the universal ribosomal protein uS10 family. Part of the 30S ribosomal subunit.

In terms of biological role, involved in the binding of tRNA to the ribosomes. The protein is Small ribosomal subunit protein uS10 of Francisella tularensis subsp. mediasiatica (strain FSC147).